The chain runs to 141 residues: Heavy metal-associated isoprenylated plant protein 29 (141 aa).

Residues 1–59 enclose the HMA domain; the sequence is MEVPMDCPGCENKVRKALEKMNGVHDVQIDIKQQRVTVTGSAEQKKVLKVARNVTKRDI. 2 residues coordinate a metal cation: Cys7 and Cys10. Cys138 bears the Cysteine methyl ester mark. A lipid anchor (S-farnesyl cysteine) is attached at Cys138. The propeptide at 139-141 is removed in mature form; the sequence is SIM.

It belongs to the HIPP family.

Its function is as follows. Heavy-metal-binding protein. This is Heavy metal-associated isoprenylated plant protein 29 from Arabidopsis thaliana (Mouse-ear cress).